We begin with the raw amino-acid sequence, 145 residues long: Brain and acute leukemia cytoplasmic protein (145 aa).

Gly-2 carries N-myristoyl glycine lipidation. Cys-3 carries the S-palmitoyl cysteine lipid modification. The segment at 3–35 (CGGSRADAIEPRYYESWTRETESTWLTYTDSDA) is interaction with CAMK2A. The tract at residues 27–120 (WLTYTDSDAP…KRDAKRTSAK (94 aa)) is disordered. Positions 83-106 (CGTQCPNPQSLGSGPLTQKQNGLR) are enriched in polar residues. The span at 108 to 119 (TEAKRDAKRTSA) shows a compositional bias: basic and acidic residues.

As to quaternary structure, interacts with CAMK2A. Post-translationally, palmitoylation and myristoylation target the protein to the lipid rafts. In terms of tissue distribution, expressed in the brain.

It localises to the cytoplasm. It is found in the synapse. The protein resides in the synaptosome. Its subcellular location is the membrane raft. The protein localises to the postsynaptic density. In terms of biological role, may play a synaptic role at the postsynaptic lipid rafts possibly through interaction with CAMK2A. The sequence is that of Brain and acute leukemia cytoplasmic protein (BAALC) from Sus scrofa (Pig).